Reading from the N-terminus, the 266-residue chain is GTP-binding protein Rhes (266 aa).

26-33 contacts GTP; it reads GASRVGKS. Residues 48–56 carry the Effector region motif; sequence YTPTIEDFH. GTP contacts are provided by residues 73 to 77 and 140 to 143; these read DTSGN and NKND. The segment at 189–235 is interaction with GNB1, GNB2 and GNB3; the sequence is MAKLPHEMSPALHRKISVQYGDAFHPRPFCMRRVKEMDAYGMVSPFA. Cysteine 263 carries the post-translational modification Cysteine methyl ester. Cysteine 263 carries S-farnesyl cysteine lipidation. Positions 264 to 266 are cleaved as a propeptide — removed in mature form; that stretch reads TIQ.

It belongs to the small GTPase superfamily. RasD family. Monomer (Potential). Interacts with PIK3CA and UBE2I. Interacts with GNB1, GNB2 and GNB3. Interacts with HTT; interacts with mutant HTT (mHTT) with a much higher affinity than wild type HTT. Farnesylated. Farnesylation is required for membrane targeting. In terms of tissue distribution, pancreatic endocrine cells (islets of Langerhans).

The protein localises to the cell membrane. Its function is as follows. GTPase signaling protein that binds to and hydrolyzes GTP. Regulates signaling pathways involving G-proteins-coupled receptor and heterotrimeric proteins such as GNB1, GNB2 and GNB3. May be involved in selected striatal competencies, mainly locomotor activity and motor coordination. The polypeptide is GTP-binding protein Rhes (RASD2) (Homo sapiens (Human)).